The chain runs to 99 residues: UPF0235 protein Avin_03050 (99 aa).

Positions 66–99 are disordered; sequence VSLESGESNRQKRVRIRRPRQLPALPGLAPRPDA. Over residues 76 to 85 the composition is skewed to basic residues; it reads QKRVRIRRPR.

The protein belongs to the UPF0235 family.

This is UPF0235 protein Avin_03050 from Azotobacter vinelandii (strain DJ / ATCC BAA-1303).